Consider the following 72-residue polypeptide: MSKEELIEFEGTVVELLPNATFRVKLENDHEIIAHTAGKMRKNRIRVLTGDKVMVEMTPYDLTKGRITYRFK.

The S1-like domain occupies 1–72 (MSKEELIEFE…TKGRITYRFK (72 aa)).

This sequence belongs to the IF-1 family. In terms of assembly, component of the 30S ribosomal translation pre-initiation complex which assembles on the 30S ribosome in the order IF-2 and IF-3, IF-1 and N-formylmethionyl-tRNA(fMet); mRNA recruitment can occur at any time during PIC assembly.

It is found in the cytoplasm. In terms of biological role, one of the essential components for the initiation of protein synthesis. Stabilizes the binding of IF-2 and IF-3 on the 30S subunit to which N-formylmethionyl-tRNA(fMet) subsequently binds. Helps modulate mRNA selection, yielding the 30S pre-initiation complex (PIC). Upon addition of the 50S ribosomal subunit IF-1, IF-2 and IF-3 are released leaving the mature 70S translation initiation complex. The protein is Translation initiation factor IF-1 of Hyphomonas neptunium (strain ATCC 15444).